Consider the following 379-residue polypeptide: Cytochrome b (379 aa).

A run of 4 helical transmembrane segments spans residues 34 to 54 (YGSL…FLSM), 78 to 99 (WLLR…YLHA), 114 to 134 (WNIG…GYVL), and 179 to 199 (FFAF…LHIM). 2 residues coordinate heme b: His-84 and His-98. His-183 and His-197 together coordinate heme b. His-202 is a binding site for a ubiquinone. Helical transmembrane passes span 227-247 (IKDT…VLFE), 289-309 (LGGV…PLTS), 321-341 (LNKT…WIGG), and 349-369 (IIIG…SPTI).

This sequence belongs to the cytochrome b family. As to quaternary structure, the main subunits of complex b-c1 are: cytochrome b, cytochrome c1 and the Rieske protein. The cofactor is heme b.

It localises to the mitochondrion inner membrane. In terms of biological role, component of the ubiquinol-cytochrome c reductase complex (complex III or cytochrome b-c1 complex) that is part of the mitochondrial respiratory chain. The b-c1 complex mediates electron transfer from ubiquinol to cytochrome c. Contributes to the generation of a proton gradient across the mitochondrial membrane that is then used for ATP synthesis. The chain is Cytochrome b (MT-CYB) from Lumbricus terrestris (Common earthworm).